The primary structure comprises 91 residues: Probable Fe(2+)-trafficking protein (91 aa).

It belongs to the Fe(2+)-trafficking protein family.

Could be a mediator in iron transactions between iron acquisition and iron-requiring processes, such as synthesis and/or repair of Fe-S clusters in biosynthetic enzymes. The polypeptide is Probable Fe(2+)-trafficking protein (Burkholderia ambifaria (strain MC40-6)).